The sequence spans 71 residues: uncharacterized protein (71 aa).

Residues 12–32 form a helical membrane-spanning segment; the sequence is FLVSIAFFGLAPTIPLLAIAL.

It is found in the membrane. This is an uncharacterized protein from Sinorhizobium fredii (strain NBRC 101917 / NGR234).